The following is a 282-amino-acid chain: Trihydroxynaphthalene reductase PfmaI (282 aa).

Positions 41, 114, and 147 each coordinate NADP(+). Residues serine 164 and tyrosine 178 each act as proton donor in the active site. The NADP(+) site is built by tyrosine 178, lysine 182, isoleucine 211, and threonine 213. Lysine 182 functions as the Lowers pKa of active site Tyr in the catalytic mechanism.

This sequence belongs to the short-chain dehydrogenases/reductases (SDR) family.

Its pathway is pigment biosynthesis; melanin biosynthesis. In terms of biological role, trihydroxynaphthalene reductase involved the biosynthesis of dihydroxynaphthalene (DHN)-melanin, a bluish-green pigment forming a dark layer in the conidial wall that protects the conidia from UV radiations. The first step of the pathway is the production of the pentaketide 1,3,6,8-tetrahydroxynaphthalene (1,3,6,8-THN or T4HN) by the polyketide synthase PfmaE though condensation of acetyl-CoA with malonyl-CoA. T4HN is not stable and easily oxidizes into the stable form flaviolin. T4HN is also substrate of the hydroxynaphthalene reductase PfmaG to yield scytalone. The scytalone dehydratase PfmaJ then reduces scytalone to 1,3,8-THN. 1,3,8-THN is then substrate of the hydroxynaphthalene reductase PfmaI to yield vermelone. Vermelone is further converted by the multicopper oxidase PfmaD to 1,8-DHN. Finally the laccase PFICI_06862 transforms 1,8-DHN to DHN-melanin. The roles of the 5-oxoprolinase PfmaA and the proline iminopeptidase PfmaB within the cluster have not been elucidated yet. The polypeptide is Trihydroxynaphthalene reductase PfmaI (Pestalotiopsis fici (strain W106-1 / CGMCC3.15140)).